We begin with the raw amino-acid sequence, 61 residues long: [Val1,Thr6]-bradykinyl-Gln,Ser (61 aa).

The N-terminal stretch at 1 to 22 is a signal peptide; the sequence is MSILKKSLFLVLFLGLVSFSIC. Residues 23-50 constitute a propeptide that is removed on maturation; sequence EEEKREAEEEENEDEIEEQSEEKKRFEP. Residues 25 to 61 are disordered; the sequence is EKREAEEEENEDEIEEQSEEKKRFEPVPPGFTPFRQS. Positions 30–42 are enriched in acidic residues; it reads EEEENEDEIEEQS. Pro-52 bears the 4-hydroxyproline; in form [Val1,Hyp2,Thr6]-Bradykinyl-Gln,Ser and [Val1,Hyp2,Thr6]-Bradykinin mark.

The protein belongs to the frog skin active peptide (FSAP) family. Bradykinin-related peptide subfamily. As to expression, expressed by the skin glands.

It localises to the secreted. In terms of biological role, induces contraction of rat ileum smooth muscle (EC(50)=2.73 uM) but has no activity towards smooth muscle from tail artery, urinary bladder or uterus up to concentrations of 100 uM. Binds to both bradykinin receptor B1 (BDKRB1) and B2 (BDKRB2); the effect via BDKRB1 is stronger. Functionally, [Val1,Hyp2,Thr6]-bradykinin-Gln,Ser: Induces contraction of rat ileum smooth muscle (EC(50)=710 nM) but has no activity towards smooth muscle from tail artery, urinary bladder or uterus up to concentrations of 100 uM. Binds to both bradykinin receptor B1 (BDKRB1) and B2 (BDKRB2); the effect via BDKRB1 is stronger. Induces contraction of guinea pig ileum smooth muscle. The protein is [Val1,Thr6]-bradykinyl-Gln,Ser of Pithecopus hypochondrialis (Orange-legged leaf frog).